A 394-amino-acid chain; its full sequence is Na(+)/H(+) antiporter NhaA (394 aa).

Transmembrane regions (helical) follow at residues 14 to 34 (AGGL…NSAL), 59 to 79 (LLLW…GLEV), 95 to 115 (VFPA…YLLF), 125 to 145 (GWAI…ALLG), 154 to 174 (VFLL…IALF), 179 to 199 (VSLQ…YMNW), 213 to 233 (LVLW…GVIV), 254 to 274 (GLHP…NAGV), 292 to 312 (IATG…WLAV), 328 to 348 (IFAV…IASL), and 363 to 383 (LGIL…LRLV).

This sequence belongs to the NhaA Na(+)/H(+) (TC 2.A.33) antiporter family.

The protein localises to the cell inner membrane. The enzyme catalyses Na(+)(in) + 2 H(+)(out) = Na(+)(out) + 2 H(+)(in). Na(+)/H(+) antiporter that extrudes sodium in exchange for external protons. The chain is Na(+)/H(+) antiporter NhaA from Yersinia pestis bv. Antiqua (strain Antiqua).